A 534-amino-acid polypeptide reads, in one-letter code: Envelope glycoprotein (534 aa).

Residues 1–34 form the signal peptide; the sequence is MEGPTHPKPSKDKTFSWDLMILVGVLLRLDVGMA. The Extracellular segment spans residues 35-534; it reads NPSPHQIYNV…SLTSLSEVVL (500 aa). 2 N-linked (GlcNAc...) asparagine; by host glycosylation sites follow: N43 and N58. Cystine bridges form between C115/C132 and C124/C137. The disordered stretch occupies residues 245–279; it reads AMGPNLVLPDQKPPSRQSQIESRVTPHHSQGNGGT. Residues 258-274 are compositionally biased toward polar residues; the sequence is PSRQSQIESRVTPHHSQ. N-linked (GlcNAc...) asparagine; by host glycosylation is found at N286, N322, and N327. The CXXC signature appears at 332–335; sequence CWLC. N-linked (GlcNAc...) asparagine; by host glycans are attached at residues N351, N354, and N430. The interval 468-488 is fusion peptide; sequence ISLTVALMLGGLTVGGIAAGV. Residues 496-534 are a coiled coil; the sequence is LETAQFRQLQMAMHTDIQALEESISALEKSLTSLSEVVL.

As to quaternary structure, the mature envelope protein (Env) consists of a trimer of SU-TM heterodimers attached by noncovalent interactions or by a labile interchain disulfide bond. Specific enzymatic cleavages in vivo yield mature proteins. Envelope glycoproteins are synthesized as an inactive precursor that is N-glycosylated and processed likely by host cell furin or by a furin-like protease in the Golgi to yield the mature SU and TM proteins. The cleavage site between SU and TM requires the minimal sequence [KR]-X-[KR]-R.

Its subcellular location is the virion membrane. The protein localises to the host cell membrane. The surface protein (SU) attaches the virus to the host cell by binding to its receptor. This interaction triggers the refolding of the transmembrane protein (TM) and is thought to activate its fusogenic potential by unmasking its fusion peptide. Fusion occurs at the host cell plasma membrane. Its function is as follows. The transmembrane protein (TM) acts as a class I viral fusion protein. Under the current model, the protein has at least 3 conformational states: pre-fusion native state, pre-hairpin intermediate state, and post-fusion hairpin state. During viral and target cell membrane fusion, the coiled coil regions (heptad repeats) assume a trimer-of-hairpins structure, positioning the fusion peptide in close proximity to the C-terminal region of the ectodomain. The formation of this structure appears to drive apposition and subsequent fusion of viral and target cell membranes. Membranes fusion leads to delivery of the nucleocapsid into the cytoplasm. This Feline sarcoma virus (strain Snyder-Theilen) protein is Envelope glycoprotein (env).